A 499-amino-acid chain; its full sequence is Potassium voltage-gated channel subfamily A member 2 (499 aa).

The tract at residues 1–26 is disordered; it reads MTVATGDPADEAAALPGHPQDTYDPE. The tetramerization domain stretch occupies residues 1-125; that stretch reads MTVATGDPAD…YELGEEAMEM (125 aa). Topologically, residues 1 to 160 are cytoplasmic; that stretch reads MTVATGDPAD…LLFEYPESSG (160 aa). A helical membrane pass occupies residues 161–182; that stretch reads PARIIAIVSVMVILISIVSFCL. Over 183-221 the chain is Extracellular; the sequence is ETLPIFRDENEDMHGSGVTFHTYSNSTIGYQQSTSFTDP. An N-linked (GlcNAc...) asparagine glycan is attached at Asn207. A helical transmembrane segment spans residues 222-243; the sequence is FFIVETLCIIWFSFEFLVRFFA. Residue Cys244 is the site of S-palmitoyl cysteine attachment. At 244–254 the chain is on the cytoplasmic side; sequence CPSKAGFFTNI. Residues 255-275 form a helical membrane-spanning segment; it reads MNIIDIVAIIPYFITLGTELA. Over 276–289 the chain is Extracellular; it reads EKPEDAQQGQQAMS. Residues 290-310 form a helical; Voltage-sensor membrane-spanning segment; that stretch reads LAILRVIRLVRVFRIFKLSRH. Topologically, residues 311 to 325 are cytoplasmic; that stretch reads SKGLQILGQTLKASM. The interval 312–325 is S4-S5 linker; it reads KGLQILGQTLKASM. The helical transmembrane segment at 326 to 347 threads the bilayer; it reads RELGLLIFFLFIGVILFSSAVY. At 348 to 361 the chain is on the extracellular side; the sequence is FAEADERESQFPSI. Positions 362–373 form an intramembrane region, helical; it reads PDAFWWAVVSMT. The short motif at 374-379 is the Selectivity filter element; the sequence is TVGYGD. An intramembrane segment occupies 374-381; it reads TVGYGDMV. The Extracellular segment spans residues 382–388; that stretch reads PTTIGGK. A helical transmembrane segment spans residues 389 to 417; it reads IVGSLCAIAGVLTIALPVPVIVSNFNYFY. Residues 418-499 are Cytoplasmic-facing; the sequence is HRETEGEEQA…VNITKMLTDV (82 aa). Tyr429 bears the Phosphotyrosine mark. Residues Ser434, Ser440, Ser441, and Ser449 each carry the phosphoserine modification. Tyr458 is modified (phosphotyrosine). The residue at position 468 (Ser468) is a Phosphoserine. The PDZ-binding motif lies at 497–499; it reads TDV.

The protein belongs to the potassium channel family. A (Shaker) (TC 1.A.1.2) subfamily. Kv1.2/KCNA2 sub-subfamily. In terms of assembly, homotetramer and heterotetramer with other channel-forming alpha subunits, such as KCNA1, KCNA4, KCNA5, KCNA6 and KCNA7. Channel activity is regulated by interaction with the beta subunits, including KCNAB1 and KCNAB2. Identified in a complex with KCNA1 and KCNAB2. Identified in a complex with KCNA5 and KCNAB1. Identified in a complex with KCNA4 and FYN. Interacts with the beta subunit KCNAB1. Interacts with PTK2B. Interacts (via C-terminus) with CTTN. Interacts (via N-terminal cytoplasmic domain) with RHOA (GTP-bound form); this regulates channel activity by reducing location at the cell surface in response to CHRM1 activation. Interacts with DRD2. Interacts with SIGMAR1; cocaine consumption leads to increased interaction. Interacts with ADAM22. Interacts (via C-terminus) with the PDZ domains of DLG1, DLG2 and DLG4. Interacts with CNTNAP2. Interacts with ADAM11. Interacts with LYNX1. In terms of processing, phosphorylated on tyrosine residues; phosphorylation increases in response to ischemia. Phosphorylated on tyrosine residues by activated PTK2B/PYK2. Phosphorylation on tyrosine residues suppresses ion channel activity. Phosphorylated on tyrosine residues in response to CHRM1 activation; this abolishes interaction with CTTN. This is probably due to endocytosis of the phosphorylated channel subunits. Phosphorylated on serine residues in response to increased cAMP levels; phosphorylation is apparently not catalyzed by PKA. N-glycosylated, with complex, sialylated N-glycans. In terms of tissue distribution, detected in brain cortex. Detected in peroneal nerve in the juxtaparanodal regions of the node of Ranvier; expression is decreased in patients with diabetes mellitus that suffer from axonal neuropathy. Detected in paranodal and juxtanodal zones in myelinated spinal cord (at protein level).

The protein localises to the cell membrane. Its subcellular location is the membrane. It is found in the cell projection. It localises to the axon. The protein resides in the synapse. The protein localises to the endoplasmic reticulum membrane. Its subcellular location is the lamellipodium membrane. It is found in the synaptosome. It localises to the presynaptic cell membrane. The protein resides in the dendrite. The protein localises to the cell junction. Its subcellular location is the paranodal septate junction. The catalysed reaction is K(+)(in) = K(+)(out). Inhibited by 4-aminopyridine (4-AP) and charybdotoxin (CTX), but not by tetraethylammonium (TEA). Inhibited by dendrotoxin (DTX). Inhibited by tityustoxin-K alpha (TsTX-Kalpha), a toxin that is highly specific for KCNA2. Inhibited by maurotoxin. Inhibited by kappaM conotoxins kappaM-RIIIJ and kappaM-RIIIK; kappaM-RIIIJ has much higher affinity for channels containing KCNA2 than kappaM-RIIIK, with the exception of heterodimers formed by KCNA2 and KCNA7 where the opposite is true. Its function is as follows. Voltage-gated potassium channel that mediates transmembrane potassium transport in excitable membranes, primarily in the brain and the central nervous system, but also in the cardiovascular system. Prevents aberrant action potential firing and regulates neuronal output. Forms tetrameric potassium-selective channels through which potassium ions pass in accordance with their electrochemical gradient. The channel alternates between opened and closed conformations in response to the voltage difference across the membrane. Can form functional homotetrameric channels and heterotetrameric channels that contain variable proportions of KCNA1, KCNA2, KCNA4, KCNA5, KCNA6, KCNA7, and possibly other family members as well; channel properties depend on the type of alpha subunits that are part of the channel. Channel properties are modulated by cytoplasmic beta subunits that regulate the subcellular location of the alpha subunits and promote rapid inactivation of delayed rectifier potassium channels. In vivo, membranes probably contain a mixture of heteromeric potassium channel complexes, making it difficult to assign currents observed in intact tissues to any particular potassium channel family member. Homotetrameric KCNA2 forms a delayed-rectifier potassium channel that opens in response to membrane depolarization, followed by slow spontaneous channel closure. In contrast, a heteromultimer formed by KCNA2 and KCNA4 shows rapid inactivation. Regulates neuronal excitability and plays a role as pacemaker in the regulation of neuronal action potentials. KCNA2-containing channels play a presynaptic role and prevent hyperexcitability and aberrant action potential firing. Response to toxins that are selective for KCNA2-containing potassium channels suggests that in Purkinje cells, dendritic subthreshold KCNA2-containing potassium channels prevent random spontaneous calcium spikes, suppressing dendritic hyperexcitability without hindering the generation of somatic action potentials, and thereby play an important role in motor coordination. Plays a role in the induction of long-term potentiation of neuron excitability in the CA3 layer of the hippocampus. May function as down-stream effector for G protein-coupled receptors and inhibit GABAergic inputs to basolateral amygdala neurons. May contribute to the regulation of neurotransmitter release, such as gamma-aminobutyric acid (GABA). Contributes to the regulation of the axonal release of the neurotransmitter dopamine. Reduced KCNA2 expression plays a role in the perception of neuropathic pain after peripheral nerve injury, but not acute pain. Plays a role in the regulation of the time spent in non-rapid eye movement (NREM) sleep. This Homo sapiens (Human) protein is Potassium voltage-gated channel subfamily A member 2 (KCNA2).